Reading from the N-terminus, the 523-residue chain is MAAALQVLPRLARAPLHPLLWRGSVARLASSMALAEQARQLFESAVGAVLPGPMLHRALSLDPGGRQLKVRDRNFQLRQNLYLVGFGKAVLGMAAAAEELLGQHLVQGVISVPKGIRAAMERAGKQEMLLKPHSRVQVFEGAEDNLPDRDALRAALAIQQLAEGLTADDLLLVLISGGGSALLPAPIPPVTLEEKQTLTRLLAARGATIQELNTIRKALSQLKGGGLAQAAYPAQVVSLILSDVVGDPVEVIASGPTVASSHNVQDCLHILNRYGLRAALPRSVKTVLSRADSDPHGPHTCGHVLNVIIGSNVLALAEAQRQAEALGYQAVVLSAAMQGDVKSMAQFYGLLAHVARTRLTPSMAGASVEEDAQLHELAAELQIPDLQLEEALETMAWGRGPVCLLAGGEPTVQLQGSGRGGRNQELALRVGAELRRWPLGPIDVLFLSGGTDGQDGPTEAAGAWVTPELASQAAAEGLDIATFLAHNDSHTFFCCLQGGAHLLHTGMTGTNVMDTHLLFLRPR.

A Phosphoserine modification is found at Ser-60.

It belongs to the glycerate kinase type-2 family. As to expression, widely expressed.

The protein localises to the cytoplasm. Its subcellular location is the mitochondrion. It catalyses the reaction (R)-glycerate + ATP = (2R)-3-phosphoglycerate + ADP + H(+). The protein is Glycerate kinase (GLYCTK) of Homo sapiens (Human).